Reading from the N-terminus, the 209-residue chain is MADS-box transcription factor 2 (209 aa).

The region spanning 1-61 is the MADS-box domain; the sequence is MGRGKIEIKR…GKLYDYCSPK (61 aa). The region spanning 84-170 is the K-box domain; it reads HKSLSAEIDR…AFKLHQQDIA (87 aa).

In terms of tissue distribution, highly expressed in anthers and carpels. Expressed in pollen, tapetum and stigma.

It localises to the nucleus. Probable transcription factor involved in the development of floral organs. B-class protein required for normal development of lodicules (whorl 2). The chain is MADS-box transcription factor 2 (MADS2) from Oryza sativa subsp. japonica (Rice).